Reading from the N-terminus, the 264-residue chain is Proteasome subunit beta type-4 (264 aa).

Met-1 is modified (N-acetylmethionine). A propeptide spanning residues Met-1–Arg-45 is cleaved from the precursor. Ser-26 bears the Phosphoserine mark. At Tyr-102 the chain carries Phosphotyrosine.

This sequence belongs to the peptidase T1B family. In terms of assembly, the 26S proteasome consists of a 20S proteasome core and two 19S regulatory subunits. The 20S proteasome core is a barrel-shaped complex made of 28 subunits that are arranged in four stacked rings. The two outer rings are each formed by seven alpha subunits, and the two inner rings are formed by seven beta subunits. The proteolytic activity is exerted by three beta-subunits PSMB5, PSMB6 and PSMB7. Forms a ternary complex with SMAD1 and OAZ1 before PSMB4 is incorporated into the 20S proteasome. Interacts with PRPF19. (Microbial infection) Interacts with HTLV-1 Tax protein. As to quaternary structure, (Microbial infection) Interacts with HIV-1 Nef and Tat proteins.

Its subcellular location is the cytoplasm. The protein resides in the nucleus. Its function is as follows. Non-catalytic component of the 20S core proteasome complex involved in the proteolytic degradation of most intracellular proteins. This complex plays numerous essential roles within the cell by associating with different regulatory particles. Associated with two 19S regulatory particles, forms the 26S proteasome and thus participates in the ATP-dependent degradation of ubiquitinated proteins. The 26S proteasome plays a key role in the maintenance of protein homeostasis by removing misfolded or damaged proteins that could impair cellular functions, and by removing proteins whose functions are no longer required. Associated with the PA200 or PA28, the 20S proteasome mediates ubiquitin-independent protein degradation. This type of proteolysis is required in several pathways including spermatogenesis (20S-PA200 complex) or generation of a subset of MHC class I-presented antigenic peptides (20S-PA28 complex). SMAD1/OAZ1/PSMB4 complex mediates the degradation of the CREBBP/EP300 repressor SNIP1. The sequence is that of Proteasome subunit beta type-4 from Homo sapiens (Human).